Reading from the N-terminus, the 221-residue chain is Glutathione peroxidase 6 (221 aa).

The first 19 residues, 1–19, serve as a signal peptide directing secretion; the sequence is MFQQFQASCLVLFFLVGFA. Sec-73 is an active-site residue. Residue Sec-73 is a non-standard amino acid, selenocysteine.

It belongs to the glutathione peroxidase family. Expressed in olfactory epithelium and embryos.

It is found in the secreted. The catalysed reaction is 2 glutathione + H2O2 = glutathione disulfide + 2 H2O. This chain is Glutathione peroxidase 6 (GPX6), found in Homo sapiens (Human).